Reading from the N-terminus, the 220-residue chain is Ribosomal RNA small subunit methyltransferase G (220 aa).

S-adenosyl-L-methionine is bound by residues Gly78, Phe83, 129–130 (GE), and Arg146.

This sequence belongs to the methyltransferase superfamily. RNA methyltransferase RsmG family.

The protein resides in the cytoplasm. It carries out the reaction guanosine(527) in 16S rRNA + S-adenosyl-L-methionine = N(7)-methylguanosine(527) in 16S rRNA + S-adenosyl-L-homocysteine. Specifically methylates the N7 position of guanine in position 527 of 16S rRNA. The chain is Ribosomal RNA small subunit methyltransferase G from Geobacter metallireducens (strain ATCC 53774 / DSM 7210 / GS-15).